Here is a 188-residue protein sequence, read N- to C-terminus: MSVTRLSFPYGESIQWHSPDQIPQLPPSPFREWLLASGSLTQKLKSHCNQFEVKVLGEAMLPPFPGELPHQGQAWIREVLLCLDGIPWVFARTLVPGAMMDSAQDNFLSLGTRPLGELLFTSGDFTPGKIEVGEFTACDSLAKLIDSLEQESHHPLWGRRRYFSHGDQQLIVSEIFLPKARQLIDRLA.

Residues R77, L115, and E174 each coordinate substrate.

It belongs to the UbiC family.

It localises to the cytoplasm. It carries out the reaction chorismate = 4-hydroxybenzoate + pyruvate. Its pathway is cofactor biosynthesis; ubiquinone biosynthesis. In terms of biological role, removes the pyruvyl group from chorismate, with concomitant aromatization of the ring, to provide 4-hydroxybenzoate (4HB) for the ubiquinone pathway. This chain is Probable chorismate pyruvate-lyase, found in Shewanella loihica (strain ATCC BAA-1088 / PV-4).